The chain runs to 248 residues: Proteasome subunit alpha (248 aa).

The protein belongs to the peptidase T1A family. In terms of assembly, the 20S proteasome core is composed of 14 alpha and 14 beta subunits that assemble into four stacked heptameric rings, resulting in a barrel-shaped structure. The two inner rings, each composed of seven catalytic beta subunits, are sandwiched by two outer rings, each composed of seven alpha subunits. The catalytic chamber with the active sites is on the inside of the barrel. Has a gated structure, the ends of the cylinder being occluded by the N-termini of the alpha-subunits. Is capped at one or both ends by the proteasome regulatory ATPase, PAN.

Its subcellular location is the cytoplasm. Its activity is regulated as follows. The formation of the proteasomal ATPase PAN-20S proteasome complex, via the docking of the C-termini of PAN into the intersubunit pockets in the alpha-rings, triggers opening of the gate for substrate entry. Interconversion between the open-gate and close-gate conformations leads to a dynamic regulation of the 20S proteasome proteolysis activity. Functionally, component of the proteasome core, a large protease complex with broad specificity involved in protein degradation. The polypeptide is Proteasome subunit alpha (Methanothermobacter thermautotrophicus (strain ATCC 29096 / DSM 1053 / JCM 10044 / NBRC 100330 / Delta H) (Methanobacterium thermoautotrophicum)).